The primary structure comprises 85 residues: Beta-insect depressant toxin Lqh-dprIT3f (85 aa).

Residues 1-21 form the signal peptide; it reads MKLLLLLTISASMLIEGLVNA. An LCN-type CS-alpha/beta domain is found at 22-82; sequence DGYIRGGDGC…EWDYETDTCG (61 aa). 4 disulfides stabilise this stretch: C31–C81, C35–C56, C42–C63, and C46–C65. The residue at position 82 (G82) is a Glycine amide.

Belongs to the long (4 C-C) scorpion toxin superfamily. Sodium channel inhibitor family. Beta subfamily. Expressed by the venom gland.

The protein localises to the secreted. Depressant insect beta-toxins cause a transient contraction paralysis followed by a slow flaccid paralysis. They bind voltage-independently at site-4 of sodium channels (Nav) and block action potentials, primarily by depolarizing the axonal membrane and suppressing the sodium current. This depressant toxin is active only on insects. It is found in a relatively small amount in the venom. This is Beta-insect depressant toxin Lqh-dprIT3f from Leiurus hebraeus (Hebrew deathstalker scorpion).